Consider the following 783-residue polypeptide: Outer membrane usher protein FanD (783 aa).

The first 23 residues, 1 to 23, serve as a signal peptide directing secretion; it reads MNRKKHQILKILLLCLISSKSSA. Cys763 and Cys782 are disulfide-bonded.

It belongs to the fimbrial export usher family.

The protein resides in the cell outer membrane. Involved in the export and assembly of K99 fimbrial subunits across the outer membrane. This is Outer membrane usher protein FanD (fanD) from Escherichia coli.